Here is a 127-residue protein sequence, read N- to C-terminus: Large ribosomal subunit protein uL24A (127 aa).

The protein belongs to the universal ribosomal protein uL24 family. In terms of assembly, component of the large ribosomal subunit (LSU). Mature yeast ribosomes consist of a small (40S) and a large (60S) subunit. The 40S small subunit contains 1 molecule of ribosomal RNA (18S rRNA) and 33 different proteins (encoded by 57 genes). The large 60S subunit contains 3 rRNA molecules (25S, 5.8S and 5S rRNA) and 46 different proteins (encoded by 81 genes).

It is found in the cytoplasm. Functionally, component of the ribosome, a large ribonucleoprotein complex responsible for the synthesis of proteins in the cell. The small ribosomal subunit (SSU) binds messenger RNAs (mRNAs) and translates the encoded message by selecting cognate aminoacyl-transfer RNA (tRNA) molecules. The large subunit (LSU) contains the ribosomal catalytic site termed the peptidyl transferase center (PTC), which catalyzes the formation of peptide bonds, thereby polymerizing the amino acids delivered by tRNAs into a polypeptide chain. The nascent polypeptides leave the ribosome through a tunnel in the LSU and interact with protein factors that function in enzymatic processing, targeting, and the membrane insertion of nascent chains at the exit of the ribosomal tunnel. The chain is Large ribosomal subunit protein uL24A from Saccharomyces cerevisiae (strain ATCC 204508 / S288c) (Baker's yeast).